The primary structure comprises 572 residues: Potassium-transporting ATPase potassium-binding subunit (572 aa).

Transmembrane regions (helical) follow at residues 6–26 (ILFV…GTYI), 66–86 (FFSL…VLLL), 135–155 (ALAV…IVLI), 177–197 (IFWI…FQGV), 251–271 (TIIT…ALTY), 283–303 (GWMI…VMTI), 382–402 (IFGG…LAVF), 428–448 (MFAL…AAVI), 493–513 (ITIA…VMML), and 537–557 (FIFS…TIFP).

This sequence belongs to the KdpA family. The system is composed of three essential subunits: KdpA, KdpB and KdpC.

The protein localises to the cell inner membrane. Part of the high-affinity ATP-driven potassium transport (or Kdp) system, which catalyzes the hydrolysis of ATP coupled with the electrogenic transport of potassium into the cytoplasm. This subunit binds the periplasmic potassium ions and delivers the ions to the membrane domain of KdpB through an intramembrane tunnel. In Francisella philomiragia subsp. philomiragia (strain ATCC 25017 / CCUG 19701 / FSC 153 / O#319-036), this protein is Potassium-transporting ATPase potassium-binding subunit.